A 177-amino-acid polypeptide reads, in one-letter code: Large ribosomal subunit protein uL6 (177 aa).

This sequence belongs to the universal ribosomal protein uL6 family. In terms of assembly, part of the 50S ribosomal subunit.

In terms of biological role, this protein binds to the 23S rRNA, and is important in its secondary structure. It is located near the subunit interface in the base of the L7/L12 stalk, and near the tRNA binding site of the peptidyltransferase center. The sequence is that of Large ribosomal subunit protein uL6 from Polynucleobacter necessarius subsp. necessarius (strain STIR1).